We begin with the raw amino-acid sequence, 336 residues long: N-lysine methyltransferase KMT5A (336 aa).

Positions 1 to 112 (MGRGKKMSKP…KPSEQRETEC (112 aa)) are disordered. A compositionally biased stretch (basic and acidic residues) spans 67 to 93 (SVAHHESKCPGKPLTETRKKAEVEKKR). Residues 200–321 (EGMKMDMITG…VGEELLYDYG (122 aa)) form the SET domain. S-adenosyl-L-methionine is bound by residues 210–212 (KGR), tyrosine 255, and 282–283 (NH).

It belongs to the class V-like SAM-binding methyltransferase superfamily. Histone-lysine methyltransferase family. PR/SET subfamily.

Its subcellular location is the nucleus. It is found in the chromosome. The catalysed reaction is L-lysyl(20)-[histone H4] + S-adenosyl-L-methionine = N(6)-methyl-L-lysyl(20)-[histone H4] + S-adenosyl-L-homocysteine + H(+). The enzyme catalyses L-lysyl-[protein] + S-adenosyl-L-methionine = N(6)-methyl-L-lysyl-[protein] + S-adenosyl-L-homocysteine + H(+). Protein-lysine N-methyltransferase that monomethylates both histones and non-histone proteins. Specifically monomethylates 'Lys-20' of histone H4 (H4K20me1). H4K20me1 is enriched during mitosis and represents a specific tag for epigenetic transcriptional repression. Mainly functions in euchromatin regions, thereby playing a central role in the silencing of euchromatic genes. Required for cell proliferation, probably by contributing to the maintenance of proper higher-order structure of DNA during mitosis. Involved in chromosome condensation and proper cytokinesis. Nucleosomes are preferred as substrate compared to free histones. Mediates monomethylation of p53/TP53 at 'Lys-382', leading to repress p53/TP53-target genes. Plays a negative role in TGF-beta response regulation and a positive role in cell migration. In Xenopus tropicalis (Western clawed frog), this protein is N-lysine methyltransferase KMT5A.